The following is a 154-amino-acid chain: Probable chemoreceptor glutamine deamidase CheD (154 aa).

This sequence belongs to the CheD family.

It carries out the reaction L-glutaminyl-[protein] + H2O = L-glutamyl-[protein] + NH4(+). Functionally, probably deamidates glutamine residues to glutamate on methyl-accepting chemotaxis receptors (MCPs), playing an important role in chemotaxis. This Methanococcus maripaludis (strain DSM 14266 / JCM 13030 / NBRC 101832 / S2 / LL) protein is Probable chemoreceptor glutamine deamidase CheD.